Here is a 333-residue protein sequence, read N- to C-terminus: Holliday junction branch migration complex subunit RuvB (333 aa).

The tract at residues 1-182 is large ATPase domain (RuvB-L); sequence MEERLVSGDV…FGVISRLEYY (182 aa). ATP-binding positions include L21, R22, G63, K66, T67, T68, 129-131, R172, Y182, and R219; that span reads EDY. Residue T67 participates in Mg(2+) binding. Residues 183–253 are small ATPAse domain (RuvB-S); it reads TTEHLTQIVM…LAKEALELLQ (71 aa). The segment at 256 to 333 is head domain (RuvB-H); the sequence is RLGLDHIDHK…EHFGMEVPKQ (78 aa). DNA-binding residues include R311 and R316.

Belongs to the RuvB family. As to quaternary structure, homohexamer. Forms an RuvA(8)-RuvB(12)-Holliday junction (HJ) complex. HJ DNA is sandwiched between 2 RuvA tetramers; dsDNA enters through RuvA and exits via RuvB. An RuvB hexamer assembles on each DNA strand where it exits the tetramer. Each RuvB hexamer is contacted by two RuvA subunits (via domain III) on 2 adjacent RuvB subunits; this complex drives branch migration. In the full resolvosome a probable DNA-RuvA(4)-RuvB(12)-RuvC(2) complex forms which resolves the HJ.

It localises to the cytoplasm. The catalysed reaction is ATP + H2O = ADP + phosphate + H(+). Its function is as follows. The RuvA-RuvB-RuvC complex processes Holliday junction (HJ) DNA during genetic recombination and DNA repair, while the RuvA-RuvB complex plays an important role in the rescue of blocked DNA replication forks via replication fork reversal (RFR). RuvA specifically binds to HJ cruciform DNA, conferring on it an open structure. The RuvB hexamer acts as an ATP-dependent pump, pulling dsDNA into and through the RuvAB complex. RuvB forms 2 homohexamers on either side of HJ DNA bound by 1 or 2 RuvA tetramers; 4 subunits per hexamer contact DNA at a time. Coordinated motions by a converter formed by DNA-disengaged RuvB subunits stimulates ATP hydrolysis and nucleotide exchange. Immobilization of the converter enables RuvB to convert the ATP-contained energy into a lever motion, pulling 2 nucleotides of DNA out of the RuvA tetramer per ATP hydrolyzed, thus driving DNA branch migration. The RuvB motors rotate together with the DNA substrate, which together with the progressing nucleotide cycle form the mechanistic basis for DNA recombination by continuous HJ branch migration. Branch migration allows RuvC to scan DNA until it finds its consensus sequence, where it cleaves and resolves cruciform DNA. The polypeptide is Holliday junction branch migration complex subunit RuvB (Geobacillus sp. (strain WCH70)).